Here is a 242-residue protein sequence, read N- to C-terminus: MAETEALSKLREDFRMQNKSVFILGASGETGRVLLKEILEQGLFSKVTLIGRRKLTFDEEAYKNVNQEVVDFEKLDDYASAFQGHDVGFCCLGTTRGKAGAEGFARVDRDYVLKSAELAKAGGCKHFNLLSSKGADKSSNFLYLQVKGEVEAKVEELKFDRYSVFRPGVXLCDRQESRPGEWLVRKFFGSLPDSWASGHSVPVVTVVRAMLNNVVRPRDKQMELLENKAIHDLGKAHGSLKP.

Residue alanine 2 is modified to N-acetylalanine. The required for interaction with elongation factor EEF1A1 stretch occupies residues 2–25 (AETEALSKLREDFRMQNKSVFILG). Residues serine 27, glycine 28, glutamate 29, threonine 30, arginine 52, arginine 53, leucine 92, glycine 93, tyrosine 143, lysine 147, and arginine 178 each coordinate NADPH. Tyrosine 143 acts as the Proton acceptor in catalysis. Residue lysine 147 is part of the active site.

Monomer. Forms homodimers during oxidative stress. Interacts (via N-terminus) with elongation factor EEF1A1 (via middle-region); the interaction is direct and competes with EEF1A1 binding to guanyl-nucleotide exchange factor EEF1B2, thereby inhibiting GDP for GTP exchange and reactivation of EEF1A1. Interacts with nuclear transport receptors XPO4, IPO5/RANBP5, IPO7, IPO9 and KPNB1 as well as GCN1L1/GCN1 and LRPPRC probably through their HEAT repeats. Binds NCOA5/CIA.

It localises to the cytoplasm. Represses translation by preventing reactivation of elongation factor eEF1A. May also inhibit nuclear import by competing with nuclear import substrates for binding to a subset of nuclear transport receptors. Has additionally been proposed to act as a redox sensor involved in cellular oxidative stress surveillance. The sequence is that of Protein HTATIP2 (HTATIP2) from Pan paniscus (Pygmy chimpanzee).